Consider the following 549-residue polypeptide: Oxygen-dependent choline dehydrogenase (549 aa).

4 to 33 is an FAD binding site; it reads DFVIIGSGSAGSALAYRLSEGGKNSVIVIE. Histidine 465 serves as the catalytic Proton acceptor.

Belongs to the GMC oxidoreductase family. FAD serves as cofactor.

It carries out the reaction choline + A = betaine aldehyde + AH2. It catalyses the reaction betaine aldehyde + NAD(+) + H2O = glycine betaine + NADH + 2 H(+). It participates in amine and polyamine biosynthesis; betaine biosynthesis via choline pathway; betaine aldehyde from choline (cytochrome c reductase route): step 1/1. Its function is as follows. Involved in the biosynthesis of the osmoprotectant glycine betaine. Catalyzes the oxidation of choline to betaine aldehyde and betaine aldehyde to glycine betaine at the same rate. The protein is Oxygen-dependent choline dehydrogenase of Rhizobium johnstonii (strain DSM 114642 / LMG 32736 / 3841) (Rhizobium leguminosarum bv. viciae).